The following is a 550-amino-acid chain: O-phosphoserine--tRNA(Cys) ligase (550 aa).

The interval 1-32 is disordered; the sequence is MRFNPQDWKEKSHTNFEGAWHDGPSVITPPGE. Residues 212 to 214, 257 to 259, 299 to 300, and N342 contribute to the substrate site; these read HMT, SAS, and YY.

This sequence belongs to the class-II aminoacyl-tRNA synthetase family. O-phosphoseryl-tRNA(Cys) synthetase subfamily. As to quaternary structure, homotetramer. Interacts with SepCysS.

It carries out the reaction tRNA(Cys) + O-phospho-L-serine + ATP = O-phospho-L-seryl-tRNA(Cys) + AMP + diphosphate. Functionally, catalyzes the attachment of O-phosphoserine (Sep) to tRNA(Cys). This Methanoregula boonei (strain DSM 21154 / JCM 14090 / 6A8) protein is O-phosphoserine--tRNA(Cys) ligase.